A 148-amino-acid polypeptide reads, in one-letter code: Large ribosomal subunit protein bL9 (148 aa).

This sequence belongs to the bacterial ribosomal protein bL9 family.

Binds to the 23S rRNA. This chain is Large ribosomal subunit protein bL9, found in Acinetobacter baumannii (strain AB307-0294).